The chain runs to 1339 residues: MAAAGARLSPGPGSGLRGRPRLCFHPGPPPLLPLLLLFLLLLPPPPLLAGATAAASREPDSPCRLKTVTVSTLPALRESDIGWSGARAGAGAGTGAGAAAAAASPGSPGSAGTAAESRLLLFVRNELPGRIAVQDDLDNTELPFFTLEMSGTAADISLVHWRQQWLENGTLYFHVSMSSSGQLAQATAPTLQEPSEIVEEQMHILHISVMGGLIALLLLLLVFTVALYAQRRWQKRRRIPQKSASTEATHEIHYIPSVLLGPQARESFRSSRLQTHNSVIGVPIRETPILDDYDCEEDEEPPRRANHVSREDEFGSQVTHTLDSLGHPGEEKVDFEKKAAAEATQETVESLMQKFKESFRANTPIEIGQLQPPLRSTSAGKRKRRSKSRGGISFGRAKGTSGSEADDETQLTFYTEQYRSRRRSKGLLKSPVNKTALTLIAVSSCILAMVCGSQMSCPLTVKVTLHVPEHFIADGSSFVVSEGSYLDISDWLNPAKLSLYYQINATSPWVRDLCGQRTTDACEQLCDPETGECSCHEGYAPDPVHRHLCVRSDWGQSEGPWPYTTLERGYDLVTGEQAPEKILRSTFSLGQGLWLPVSKSFVVPPVELSINPLASCKTDVLVTEDPADVREEAMLSTYFETINDLLSSFGPVRDCSRNNGGCTRNFKCVSDRQVDSSGCVCPEELKPMKDGSGCYDHSKGIDCSDGFNGGCEQLCLQQTLPLPYDATSSTIFMFCGCVEEYKLAPDGKSCLMLSDVCEGPKCLKPDSKFNDTLFGEMLHGYNNRTQHVNQGQVFQMTFRENNFIKDFPQLADGLLVIPLPVEEQCRGVLSEPLPDLQLLTGDIRYDEAMGYPMVQQWRVRSNLYRVKLSTITLAAGFTNVLKILTKESSREELLSFIQHYGSHYIAEALYGSELTCIIHFPSKKVQQQLWLQYQKETTELGSKKELKSMPFITYLSGLLTAQMLSDDQLISGVEIRCEEKGRCPSTCHLCRRPGKEQLSPTPVLLEINRVVPLYTLIQDNGTKEAFKSALMSSYWCSGKGDVIDDWCRCDLSAFDANGLPNCSPLLQPVLRLSPTVEPSSTVVSLEWVDVQPAIGTKVSDYILQHKKVDEYTDTDLYTGEFLSFADDLLSGLGTSCVAAGRSHGEVPEVSIYSVIFKCLEPDGLYKFTLYAVDTRGRHSELSTVTLRTACPLVDDNKAEEIADKIYNLYNGYTSGKEQQMAYNTLMEVSASMLFRVQHHYNSHYEKFGDFVWRSEDELGPRKAHLILRRLERVSSHCSSLLRSAYIQSRVETVPYLFCRSEEVRPAGMVWYSILKDTKITCEEKMVSMARNTYGESKGR.

The signal sequence occupies residues 1–49; that stretch reads MAAAGARLSPGPGSGLRGRPRLCFHPGPPPLLPLLLLFLLLLPPPPLLA. Residues 50–206 are Lumenal-facing; that stretch reads GATAAASREP…IVEEQMHILH (157 aa). Residue Asn168 is glycosylated (N-linked (GlcNAc...) asparagine). A helical transmembrane segment spans residues 207 to 227; sequence ISVMGGLIALLLLLLVFTVAL. Residues 228 to 434 are Cytoplasmic-facing; it reads YAQRRWQKRR…KGLLKSPVNK (207 aa). Disordered regions lie at residues 296 to 316 and 363 to 408; these read EEDEEPPRRANHVSREDEFGS and TPIE…ADDE. The chain crosses the membrane as a helical span at residues 435–455; that stretch reads TALTLIAVSSCILAMVCGSQM. Residues 456 to 1339 lie on the Lumenal side of the membrane; sequence SCPLTVKVTL…RNTYGESKGR (884 aa). EGF-like domains follow at residues 510-550, 651-695, and 699-751; these read VRDL…HLCV, PVRD…SGCY, and KGID…KSCL. Intrachain disulfides connect Cys514-Cys526, Cys522-Cys533, Cys535-Cys549, Cys655-Cys668, Cys662-Cys679, Cys681-Cys694, Cys703-Cys715, Cys711-Cys735, and Cys737-Cys750. 2 N-linked (GlcNAc...) asparagine glycosylation sites follow: Asn770 and Asn783. Disulfide bonds link Cys825-Cys987, Cys916-Cys977, and Cys983-Cys990. Asn1020 is a glycosylation site (N-linked (GlcNAc...) asparagine). 5 disulfide bridges follow: Cys1036–Cys1047, Cys1049–Cys1062, Cys1136–Cys1158, Cys1190–Cys1277, and Cys1298–Cys1321. The Fibronectin type-III domain maps to 1065–1188; it reads LLQPVLRLSP…SELSTVTLRT (124 aa).

Belongs to the astrotactin family. In terms of assembly, interacts with ASTN1; the interaction is not calcium-dependent.

Its subcellular location is the membrane. The protein resides in the perikaryon. It is found in the cytoplasm. It localises to the cell cortex. The protein localises to the early endosome. Its subcellular location is the late endosome. The protein resides in the cytoplasmic vesicle. It is found in the clathrin-coated vesicle. In terms of biological role, mediates recycling of the neuronal cell adhesion molecule ASTN1 to the anterior pole of the cell membrane in migrating neurons. Promotes ASTN1 internalization and intracellular transport of endocytosed ASTN1. Selectively binds inositol-4,5-bisphosphate, inositol-3,4,5-trisphosphate and inositol-1,3,4,5-tetrakisphosphate, suggesting it is recruited to membranes that contain lipids with a phosphoinositide headgroup. The protein is Astrotactin-2 (ASTN2) of Homo sapiens (Human).